Here is a 251-residue protein sequence, read N- to C-terminus: Pyridoxine 5'-phosphate synthase (251 aa).

Residue asparagine 7 coordinates 3-amino-2-oxopropyl phosphate. 1-deoxy-D-xylulose 5-phosphate is bound at residue 9–10 (DH). Arginine 18 lines the 3-amino-2-oxopropyl phosphate pocket. Residue histidine 43 is the Proton acceptor of the active site. Arginine 45 and histidine 50 together coordinate 1-deoxy-D-xylulose 5-phosphate. Glutamate 70 acts as the Proton acceptor in catalysis. Threonine 100 is a 1-deoxy-D-xylulose 5-phosphate binding site. The Proton donor role is filled by histidine 198. 3-amino-2-oxopropyl phosphate contacts are provided by residues alanine 199 and 220–221 (GH).

It belongs to the PNP synthase family. Homooctamer; tetramer of dimers.

Its subcellular location is the cytoplasm. It catalyses the reaction 3-amino-2-oxopropyl phosphate + 1-deoxy-D-xylulose 5-phosphate = pyridoxine 5'-phosphate + phosphate + 2 H2O + H(+). The protein operates within cofactor biosynthesis; pyridoxine 5'-phosphate biosynthesis; pyridoxine 5'-phosphate from D-erythrose 4-phosphate: step 5/5. Its function is as follows. Catalyzes the complicated ring closure reaction between the two acyclic compounds 1-deoxy-D-xylulose-5-phosphate (DXP) and 3-amino-2-oxopropyl phosphate (1-amino-acetone-3-phosphate or AAP) to form pyridoxine 5'-phosphate (PNP) and inorganic phosphate. The protein is Pyridoxine 5'-phosphate synthase of Dechloromonas aromatica (strain RCB).